The sequence spans 824 residues: 4-methylaminobutanoate oxidase (formaldehyde-forming) (824 aa).

Histidine 67 bears the Pros-8alpha-FAD histidine mark.

The protein belongs to the GcvT family. It depends on FAD as a cofactor.

The enzyme catalyses 4-(methylamino)butanoate + O2 + H2O = 4-aminobutanoate + formaldehyde + H2O2. It participates in alkaloid degradation; nicotine degradation. Its function is as follows. Catalyzes the oxidative demethylation of 4-methylaminobutanoate produced from the pyrrolidine ring of nicotine. To a much lesser extent, can also use sarcosine as substrate, but is not active against dimethylglycine, methylaminopropionitrile, methylaminopropylamine, and alpha-methylaminobutanoate. This chain is 4-methylaminobutanoate oxidase (formaldehyde-forming) (abo), found in Paenarthrobacter nicotinovorans (Arthrobacter nicotinovorans).